The following is a 443-amino-acid chain: Enolase B (443 aa).

The substrate site is built by His156 and Glu165. The active-site Proton donor is the Glu208. Residues Asp243, Glu296, and Asp323 each coordinate Mg(2+). Substrate is bound by residues Glu296 and Asp323. Lys348 functions as the Proton acceptor in the catalytic mechanism. Residues 375–378 (SHRS) and Lys399 contribute to the substrate site.

This sequence belongs to the enolase family. In terms of assembly, homodimer. The cofactor is Mg(2+).

The protein localises to the cytoplasm. It catalyses the reaction (2R)-2-phosphoglycerate = phosphoenolpyruvate + H2O. The protein operates within carbohydrate degradation; glycolysis; pyruvate from D-glyceraldehyde 3-phosphate: step 4/5. This Dictyostelium discoideum (Social amoeba) protein is Enolase B (enoB).